A 271-amino-acid polypeptide reads, in one-letter code: DNA repair protein RecO (271 aa).

A compositionally biased stretch (basic and acidic residues) spans 249–264 (VRVEDSVRQDGDRDST). The disordered stretch occupies residues 249–271 (VRVEDSVRQDGDRDSTTRTSSPA).

Belongs to the RecO family.

In terms of biological role, involved in DNA repair and RecF pathway recombination. The protein is DNA repair protein RecO of Rhodococcus jostii (strain RHA1).